The sequence spans 242 residues: Biosynthetic peptidoglycan transglycosylase (242 aa).

A helical membrane pass occupies residues 19 to 39; it reads LMVVLAVFWGGGIALFSVAPV.

The protein belongs to the glycosyltransferase 51 family.

The protein resides in the cell inner membrane. It carries out the reaction [GlcNAc-(1-&gt;4)-Mur2Ac(oyl-L-Ala-gamma-D-Glu-L-Lys-D-Ala-D-Ala)](n)-di-trans,octa-cis-undecaprenyl diphosphate + beta-D-GlcNAc-(1-&gt;4)-Mur2Ac(oyl-L-Ala-gamma-D-Glu-L-Lys-D-Ala-D-Ala)-di-trans,octa-cis-undecaprenyl diphosphate = [GlcNAc-(1-&gt;4)-Mur2Ac(oyl-L-Ala-gamma-D-Glu-L-Lys-D-Ala-D-Ala)](n+1)-di-trans,octa-cis-undecaprenyl diphosphate + di-trans,octa-cis-undecaprenyl diphosphate + H(+). The protein operates within cell wall biogenesis; peptidoglycan biosynthesis. Functionally, peptidoglycan polymerase that catalyzes glycan chain elongation from lipid-linked precursors. This Escherichia coli O17:K52:H18 (strain UMN026 / ExPEC) protein is Biosynthetic peptidoglycan transglycosylase.